A 370-amino-acid chain; its full sequence is Uroporphyrinogen decarboxylase (370 aa).

Residues 29–33, Asp-79, Tyr-155, Ser-210, and His-342 each bind substrate; that span reads RQAGR.

The protein belongs to the uroporphyrinogen decarboxylase family. Homodimer.

Its subcellular location is the cytoplasm. The catalysed reaction is uroporphyrinogen III + 4 H(+) = coproporphyrinogen III + 4 CO2. The protein operates within porphyrin-containing compound metabolism; protoporphyrin-IX biosynthesis; coproporphyrinogen-III from 5-aminolevulinate: step 4/4. Functionally, catalyzes the decarboxylation of four acetate groups of uroporphyrinogen-III to yield coproporphyrinogen-III. This Verminephrobacter eiseniae (strain EF01-2) protein is Uroporphyrinogen decarboxylase.